Reading from the N-terminus, the 163-residue chain is MRLTSKGRYAVTAMLDVALNSETGPVPLADISERQGISLSYLEQLFSRLRKNGLVSSVRGPGGGYLLGKDAGSIAVGEVISAVDESVDATRCQGKGGCQGGDKCLTHALWRDLSERLTGFLNNITLGELVNNQEILDVSGRQHQHETQRNARTQDAIDVKLRA.

An HTH rrf2-type domain is found at 2–131; it reads RLTSKGRYAV…NNITLGELVN (130 aa). A DNA-binding region (H-T-H motif) is located at residues 28 to 51; the sequence is LADISERQGISLSYLEQLFSRLRK. 3 residues coordinate [2Fe-2S] cluster: cysteine 92, cysteine 98, and cysteine 104.

It depends on [2Fe-2S] cluster as a cofactor.

Functionally, regulates the transcription of several operons and genes involved in the biogenesis of Fe-S clusters and Fe-S-containing proteins. This Klebsiella pneumoniae subsp. pneumoniae (strain ATCC 700721 / MGH 78578) protein is HTH-type transcriptional regulator IscR.